Consider the following 478-residue polypeptide: MDKKPLNTLISATGLWMSRTGKLHKIRHHEVSKRKIYIEMECGERLVVNNSRSCRAARALRHHKYRKICKHCRVSDEDLNKFLTRTNEDKSNAKVTVVSAPKIRKVMPKSVARTPKPLENTAPVQTLPSESQPAPTTPISASTTAPASTSTTAPAPASTTAPAPASTTAPASASTTISTSAMPASTSAQGTTKFNYISGGFPRPIPVQASAPALTKSQIDRLQGLLSPKDEISLDSGTPFRKLESELLSRRRKDLKQIYAEEREHYLGKLEREITKFFVDRGFLEIKSPILIPMEYIERMGIDNDKELSKQIFRVDNNFCLRPMLAPNLYNYLRKLNRALPDPIKIFEIGPCYRKESDGKEHLEEFTMLNFCQMGSGCTRENLEAIIKDFLDYLGIDFEIVGDSCMVYGDTLDVMHGDLELSSAVVGPVPMDRDWGINKPWIGAGFGLERLLKVMHNFKNIKRASRSESYYNGISTNL.

The tract at residues Val106–Ala188 is disordered. Residues Ala122–Gln132 show a composition bias toward polar residues. A compositionally biased stretch (low complexity) spans Pro133–Ala188.

This sequence belongs to the class-II aminoacyl-tRNA synthetase family.

It localises to the cytoplasm. The catalysed reaction is tRNA(Pyl) + L-pyrrolysine + ATP = L-pyrrolysyl-tRNA(Pyl) + AMP + diphosphate. Its function is as follows. Catalyzes the attachment of pyrrolysine to tRNA(Pyl). Pyrrolysine is a lysine derivative encoded by the termination codon UAG. In Methanosarcina thermophila, this protein is Pyrrolysine--tRNA ligase.